The following is a 130-amino-acid chain: Cuticle protein 14 isoform a (130 aa).

The Chitin-binding type R&amp;R domain occupies 24–90; that stretch reads IGNYNFGYNE…NVHTNEPGTD (67 aa).

The chain is Cuticle protein 14 isoform a from Limulus polyphemus (Atlantic horseshoe crab).